A 185-amino-acid chain; its full sequence is Ribosome-recycling factor (185 aa).

This sequence belongs to the RRF family.

Its subcellular location is the cytoplasm. Responsible for the release of ribosomes from messenger RNA at the termination of protein biosynthesis. May increase the efficiency of translation by recycling ribosomes from one round of translation to another. The sequence is that of Ribosome-recycling factor from Corynebacterium glutamicum (strain R).